The chain runs to 129 residues: Small ribosomal subunit protein uS11 (129 aa).

This sequence belongs to the universal ribosomal protein uS11 family. In terms of assembly, part of the 30S ribosomal subunit. Interacts with proteins S7 and S18. Binds to IF-3.

Functionally, located on the platform of the 30S subunit, it bridges several disparate RNA helices of the 16S rRNA. Forms part of the Shine-Dalgarno cleft in the 70S ribosome. This Methylobacterium sp. (strain 4-46) protein is Small ribosomal subunit protein uS11.